Here is a 280-residue protein sequence, read N- to C-terminus: Large ribosomal subunit protein uL2cz/uL2cy (280 aa).

Disordered regions lie at residues methionine 1–asparagine 25 and proline 231–lysine 280.

It belongs to the universal ribosomal protein uL2 family. In terms of assembly, part of the 50S ribosomal subunit.

It is found in the plastid. The protein resides in the chloroplast. In Platanus occidentalis (Sycamore), this protein is Large ribosomal subunit protein uL2cz/uL2cy (rpl2-A).